Consider the following 660-residue polypeptide: Poly [ADP-ribose] polymerase 2-A (660 aa).

Residues 2-36 (SARLRVEELRAELQRRGLDASGNKPVLVRRLDAAI) form the SAP 1 domain. Residues 40–92 (EEEEAAVSAAAKEEADAGGVVDGEGNGEDKRKRKRRGDGEDVDNSESDAAKLE) are disordered. Residues 69 to 75 (KRKRKRR) carry the Nuclear localization signal motif. An SAP 2 domain is found at 91–125 (LEGMSYRELQALAKSRGLAANGSKKEVIERLLCAP). A WGR domain is found at 179–281 (TYHVLQVWFL…KSFECYARKY (103 aa)). The PARP alpha-helical domain occupies 308–426 (ETKLETRIAS…EIEIATKLLE (119 aa)). In terms of domain architecture, PARP catalytic spans 434-660 (DPLYARYKQL…LHVSFNFKKR (227 aa)).

The protein belongs to the ARTD/PARP family.

It is found in the nucleus. The catalysed reaction is NAD(+) + (ADP-D-ribosyl)n-acceptor = nicotinamide + (ADP-D-ribosyl)n+1-acceptor + H(+).. It carries out the reaction L-aspartyl-[protein] + NAD(+) = 4-O-(ADP-D-ribosyl)-L-aspartyl-[protein] + nicotinamide. The enzyme catalyses L-glutamyl-[protein] + NAD(+) = 5-O-(ADP-D-ribosyl)-L-glutamyl-[protein] + nicotinamide. Involved in the base excision repair (BER) pathway, by catalyzing the poly(ADP-ribosyl)ation of a limited number of acceptor proteins involved in chromatin architecture and in DNA metabolism. This modification follows DNA damages and appears as an obligatory step in a detection/signaling pathway leading to the reparation of DNA strand breaks. This Oryza sativa subsp. japonica (Rice) protein is Poly [ADP-ribose] polymerase 2-A (PARP2-A).